The primary structure comprises 212 residues: Adenylate kinase (212 aa).

Position 10–15 (10–15 (GAGKGT)) interacts with ATP. An NMP region spans residues 30-59 (STGDMFRAAMANQTEMGRLAKSYIDKGELV). AMP contacts are provided by residues Thr31, Arg36, 57-59 (ELV), 86-89 (GYPR), and Gln93. Residues 127–159 (GRIINRKTGETFHKVFNPPVDYKEEDYYQREDD) are LID. ATP contacts are provided by residues Arg128 and 137 to 138 (TF). Positions 156 and 167 each coordinate AMP. Position 195 (Gln195) interacts with ATP.

The protein belongs to the adenylate kinase family. Monomer.

The protein resides in the cytoplasm. The catalysed reaction is AMP + ATP = 2 ADP. It functions in the pathway purine metabolism; AMP biosynthesis via salvage pathway; AMP from ADP: step 1/1. Its function is as follows. Catalyzes the reversible transfer of the terminal phosphate group between ATP and AMP. Plays an important role in cellular energy homeostasis and in adenine nucleotide metabolism. The polypeptide is Adenylate kinase (Streptococcus pyogenes serotype M5 (strain Manfredo)).